Here is a 429-residue protein sequence, read N- to C-terminus: Phosphoribosylamine--glycine ligase (429 aa).

An ATP-grasp domain is found at 109–316; that stretch reads KDFLARHHIP…LVELCLAACD (208 aa). An ATP-binding site is contributed by 135-196; that stretch reads LREKGAPIVV…EEFLDGEEAS (62 aa). Positions 209-231 are disordered; sequence MATSQDHKRVGENDTGLNTGGMG. Positions 286 and 288 each coordinate Mg(2+).

Belongs to the GARS family. Mg(2+) serves as cofactor. It depends on Mn(2+) as a cofactor.

It carries out the reaction 5-phospho-beta-D-ribosylamine + glycine + ATP = N(1)-(5-phospho-beta-D-ribosyl)glycinamide + ADP + phosphate + H(+). The protein operates within purine metabolism; IMP biosynthesis via de novo pathway; N(1)-(5-phospho-D-ribosyl)glycinamide from 5-phospho-alpha-D-ribose 1-diphosphate: step 2/2. The polypeptide is Phosphoribosylamine--glycine ligase (Pasteurella multocida (strain Pm70)).